The following is a 361-amino-acid chain: Phenylalanine 4-monooxygenase, chloroplastic (361 aa).

The transit peptide at 1 to 55 (MLALRQGALLLSARGGQTTHDNLQLCAGPSRRPRARWISSAPRPSTLVERHIRPQ) directs the protein to the chloroplast. Positions 47 to 67 (LVERHIRPQASTASDATTSTS) are disordered. Residues 56 to 67 (ASTASDATTSTS) are compositionally biased toward low complexity. Fe cation is bound by residues His-227, His-232, and Glu-272.

The protein belongs to the biopterin-dependent aromatic amino acid hydroxylase family. It depends on Fe(2+) as a cofactor.

It localises to the plastid. It is found in the chloroplast. The catalysed reaction is (6R)-L-erythro-5,6,7,8-tetrahydrobiopterin + L-phenylalanine + O2 = (4aS,6R)-4a-hydroxy-L-erythro-5,6,7,8-tetrahydrobiopterin + L-tyrosine. Functionally, catalyzes the hydroxylation of L-phenylalanine to L-tyrosine. Can functionally complement an Escherichia coli tyrosine auxotroph. The polypeptide is Phenylalanine 4-monooxygenase, chloroplastic (Chlamydomonas reinhardtii (Chlamydomonas smithii)).